A 263-amino-acid chain; its full sequence is HTH-type transcriptional repressor NanR (263 aa).

A disordered region spans residues Met-1 to Ser-24. The 69-residue stretch at Lys-30–Pro-98 folds into the HTH gntR-type domain. The H-T-H motif DNA-binding region spans Glu-58–Ala-77.

The protein belongs to the NanR family.

Functionally, transcriptional repressor that controls expression of the genes required for the catabolism of sialic acids. The chain is HTH-type transcriptional repressor NanR from Escherichia coli O127:H6 (strain E2348/69 / EPEC).